The chain runs to 475 residues: Ribulose bisphosphate carboxylase large chain (475 aa).

Positions 1–2 are excised as a propeptide; sequence MS. Position 3 is an N-acetylproline (P3). Position 14 is an N6,N6,N6-trimethyllysine (K14). 2 residues coordinate substrate: N123 and T173. K175 acts as the Proton acceptor in catalysis. K177 contacts substrate. Mg(2+) is bound by residues K201, D203, and E204. K201 carries the post-translational modification N6-carboxylysine. Residue H294 is the Proton acceptor of the active site. Residues R295, H327, and S379 each coordinate substrate.

This sequence belongs to the RuBisCO large chain family. Type I subfamily. In terms of assembly, heterohexadecamer of 8 large chains and 8 small chains; disulfide-linked. The disulfide link is formed within the large subunit homodimers. The cofactor is Mg(2+). Post-translationally, the disulfide bond which can form in the large chain dimeric partners within the hexadecamer appears to be associated with oxidative stress and protein turnover.

The protein localises to the plastid. It is found in the chloroplast. The catalysed reaction is 2 (2R)-3-phosphoglycerate + 2 H(+) = D-ribulose 1,5-bisphosphate + CO2 + H2O. It catalyses the reaction D-ribulose 1,5-bisphosphate + O2 = 2-phosphoglycolate + (2R)-3-phosphoglycerate + 2 H(+). Its function is as follows. RuBisCO catalyzes two reactions: the carboxylation of D-ribulose 1,5-bisphosphate, the primary event in carbon dioxide fixation, as well as the oxidative fragmentation of the pentose substrate in the photorespiration process. Both reactions occur simultaneously and in competition at the same active site. This is Ribulose bisphosphate carboxylase large chain from Picea sitchensis (Sitka spruce).